The following is a 610-amino-acid chain: UvrABC system protein C (610 aa).

Residues 16–94 (SQPGVYRMYD…IKLYQPRYNV (79 aa)) enclose the GIY-YIG domain. The UVR domain occupies 204–239 (QQVLNQLISRMESASRDLRFEDAARIRDQIQAVRRV).

The protein belongs to the UvrC family. As to quaternary structure, interacts with UvrB in an incision complex.

The protein resides in the cytoplasm. Functionally, the UvrABC repair system catalyzes the recognition and processing of DNA lesions. UvrC both incises the 5' and 3' sides of the lesion. The N-terminal half is responsible for the 3' incision and the C-terminal half is responsible for the 5' incision. The sequence is that of UvrABC system protein C from Pectobacterium atrosepticum (strain SCRI 1043 / ATCC BAA-672) (Erwinia carotovora subsp. atroseptica).